The following is a 203-amino-acid chain: ATP-dependent Clp protease proteolytic subunit 2 (203 aa).

Ser-98 (nucleophile) is an active-site residue. His-123 is a catalytic residue.

It belongs to the peptidase S14 family. As to quaternary structure, fourteen ClpP subunits assemble into 2 heptameric rings which stack back to back to give a disk-like structure with a central cavity, resembling the structure of eukaryotic proteasomes.

The protein resides in the cytoplasm. It catalyses the reaction Hydrolysis of proteins to small peptides in the presence of ATP and magnesium. alpha-casein is the usual test substrate. In the absence of ATP, only oligopeptides shorter than five residues are hydrolyzed (such as succinyl-Leu-Tyr-|-NHMec, and Leu-Tyr-Leu-|-Tyr-Trp, in which cleavage of the -Tyr-|-Leu- and -Tyr-|-Trp bonds also occurs).. Functionally, cleaves peptides in various proteins in a process that requires ATP hydrolysis. Has a chymotrypsin-like activity. Plays a major role in the degradation of misfolded proteins. This is ATP-dependent Clp protease proteolytic subunit 2 from Chlamydia muridarum (strain MoPn / Nigg).